The primary structure comprises 2799 residues: E3 ubiquitin-protein ligase UBR5 (2799 aa).

Threonine 2 bears the N-acetylthreonine mark. The segment covering 77–88 has biased composition (basic and acidic residues); sequence DRLELGKPDNND. A disordered region spans residues 77–175; the sequence is DRLELGKPDN…DRGSGLLGSQ (99 aa). Residues 89–110 are compositionally biased toward polar residues; the sequence is GSKLNSNSGAGRTSRPGRTSDS. Serine 110 bears the Phosphoserine mark. The span at 135–144 shows a compositional bias: gly residues; it reads GVGGSGGGSS. In terms of domain architecture, UBA spans 184–226; it reads VIPEELISQAQVVLQGKSRSVIIRELQRTNLDVNLAVNNLLSR. A Phosphoserine modification is found at serine 327. Basic and acidic residues predominate over residues 328–347; it reads FDNERGSTSKEGEPNLDKKN. A disordered region spans residues 328 to 352; sequence FDNERGSTSKEGEPNLDKKNTPVQS. A phosphoserine mark is found at serine 352 and serine 578. The interval 579–648 is disordered; it reads PESLKNMEKA…APKEEEKVNE (70 aa). Over residues 583 to 604 the composition is skewed to basic and acidic residues; it reads KNMEKASKTTEAKPESKQEPVK. Position 612 is a phosphoserine (serine 612). The segment covering 614–628 has biased composition (low complexity); that stretch reads ASTCSDASSIASSAS. Threonine 637 carries the post-translational modification Phosphothreonine. A phosphoserine mark is found at serine 808, serine 928, and serine 1018. 2 disordered regions span residues 999-1031 and 1052-1075; these read AGLGRHEAGASSSDHQDPVSPPIAPPSWVPDPP and TAATGTGQGPSTSTIPGPSTEPSV. Residues 1017-1031 are compositionally biased toward pro residues; it reads VSPPIAPPSWVPDPP. The span at 1052–1073 shows a compositional bias: polar residues; it reads TAATGTGQGPSTSTIPGPSTEP. Phosphothreonine occurs at positions 1115 and 1135. The UBR-type zinc-finger motif lies at 1177-1245; sequence DTCSFTWTGA…EKCKCKTLIA (69 aa). Zn(2+)-binding residues include cysteine 1179, cysteine 1196, cysteine 1199, cysteine 1208, cysteine 1211, cysteine 1215, histidine 1216, and histidine 1219. Serine 1227 is subject to Phosphoserine. Residues cysteine 1232, cysteine 1234, and cysteine 1240 each contribute to the Zn(2+) site. The interval 1299–1318 is disordered; sequence REDRNRKTASPEDSDMPDHD. Serine 1308, serine 1355, serine 1375, and serine 1481 each carry phosphoserine. Residues 1515–1740 are disordered; the sequence is SVEPLPPRPS…PSSTSTPAAS (226 aa). Residues 1524–1537 show a composition bias toward low complexity; sequence SSDQSSSSSQSQSS. Residues 1538–1553 are compositionally biased toward polar residues; that stretch reads YIIRNPQQRRISQSQP. Position 1549 is a phosphoserine (serine 1549). Composition is skewed to acidic residues over residues 1559-1574 and 1605-1614; these read EEQDDIVSADVEEVEV and HDEDGSDMEL. Residues 1629-1638 show a composition bias toward polar residues; it reads NHSNQDNASG. Low complexity-rich tracts occupy residues 1641-1657, 1668-1681, and 1726-1740; these read SVVTAATAGSEAGASSV, SNDSSDSDSSSSQS, and AASTAPSSTSTPAAS. Phosphothreonine is present on threonine 1736. Serine 1741 is modified (phosphoserine). Tyrosine 1746 is modified (phosphotyrosine). Residue serine 1780 is modified to Phosphoserine. Positions 1859-1890 are disordered; that stretch reads LASAGDPGHPNHPLHASQNSARRERMTAREEA. Residues 1879–1890 show a composition bias toward basic and acidic residues; the sequence is ARRERMTAREEA. Residue threonine 1969 is modified to Phosphothreonine. The disordered stretch occupies residues 1984 to 2021; that stretch reads GIDNEDSEHENDDDTNQSATLNDKDDDSLPAETGQNHP. A compositionally biased stretch (acidic residues) spans 1985–1998; sequence IDNEDSEHENDDDT. Phosphoserine occurs at positions 1990, 2026, and 2028. The residue at position 2030 (threonine 2030) is a Phosphothreonine. At serine 2076 the chain carries Phosphoserine. The tract at residues 2117-2142 is disordered; sequence RQKKEGEEQPVLPEETESSKPGPSAH. The residue at position 2213 (threonine 2213) is a Phosphothreonine. 2 positions are modified to phosphoserine: serine 2241 and serine 2289. The tract at residues 2323–2392 is disordered; it reads HTSLMQRLRN…PSDDPEPLPA (70 aa). Composition is skewed to basic and acidic residues over residues 2332 to 2348 and 2356 to 2368; these read NRGERDREREREREMRR and SRRDRDRDFRRQL. The PABC domain maps to 2377-2454; it reads PASEGNPSDD…AMELIIAHGR (78 aa). Positions 2462-2799 constitute an HECT domain; the sequence is LDLGLVDSSE…AIKTKNFGFV (338 aa). Serine 2469, serine 2484, and serine 2486 each carry phosphoserine. The segment at 2473 to 2493 is disordered; it reads VQQENRKRHGSSRSVVDMDLD. Cysteine 2768 (glycyl thioester intermediate) is an active-site residue.

It belongs to the UBR5 family. As to quaternary structure, homotetramer; composed of a dimer of dimers. Associates with CDK9 and TFIIS/TCEA1 and forms a transcription regulatory complex made of CDK9, RNAP II, UBR5 and TFIIS/TCEA1 that can stimulate target gene transcription (e.g. gamma fibrinogen/FGG) by recruiting their promoters. Associates with the E3 ligase complex containing DYRK2, EDD/UBR5, DDB1 and DCAF1 proteins (EDVP complex). Binds TOPBP1. Interacts with PIH1D1. Interacts with CIB1. In terms of assembly, (Microbial infection) Interacts with human T-cell leukemia virus 1/HTLV-1 protein HBZ; this interaction modulates HBZ stability. Widely expressed. Most abundant in testis and expressed at high levels in brain, pituitary and kidney.

The protein resides in the nucleus. The protein localises to the cytoplasm. It catalyses the reaction S-ubiquitinyl-[E2 ubiquitin-conjugating enzyme]-L-cysteine + [acceptor protein]-L-lysine = [E2 ubiquitin-conjugating enzyme]-L-cysteine + N(6)-ubiquitinyl-[acceptor protein]-L-lysine.. It functions in the pathway protein modification; protein ubiquitination. Functionally, E3 ubiquitin-protein ligase involved in different protein quality control pathways in the cytoplasm and nucleus. Mainly acts as a ubiquitin chain elongator that extends pre-ubiquitinated substrates. Component of the N-end rule pathway: ubiquitinates proteins bearing specific N-terminal residues that are destabilizing according to the N-end rule, leading to their degradation. Recognizes type-1 N-degrons, containing positively charged amino acids (Arg, Lys and His). Together with UBR4, part of a cytoplasm protein quality control pathway that prevents protein aggregation by catalyzing assembly of heterotypic 'Lys-11'-/'Lys-48'-linked branched ubiquitin chains on aggregated proteins, leading to substrate recognition by the segregase p97/VCP and degradation by the proteasome: UBR5 is probably branching multiple 'Lys-48'-linked chains of substrates initially modified with mixed conjugates by UBR4. Together with ITCH, catalyzes 'Lys-48'-/'Lys-63'-branched ubiquitination of TXNIP, leading to its degradation: UBR5 mediates branching of 'Lys-48'-linked chains of substrates initially modified with 'Lys-63'-linked conjugates by ITCH. Catalytic component of a nuclear protein quality control pathway that mediates ubiquitination and degradation of unpaired transcription factors (i.e. transcription factors that are not assembled into functional multiprotein complexes): specifically recognizes and binds degrons that are not accessible when transcription regulators are associated with their coactivators. Ubiquitinates various unpaired transcription regulator (MYC, SUPT4H1, SUPT5H, CDC20 and MCRS1), as well as ligand-bound nuclear receptors (ESR1, NR1H3, NR3C1, PGR, RARA, RXRA AND VDR) that are not associated with their nuclear receptor coactivators (NCOAs). Involved in maturation and/or transcriptional regulation of mRNA by mediating polyubiquitination and activation of CDK9. Also acts as a regulator of DNA damage response by acting as a suppressor of RNF168, an E3 ubiquitin-protein ligase that promotes accumulation of 'Lys-63'-linked histone H2A and H2AX at DNA damage sites, thereby acting as a guard against excessive spreading of ubiquitinated chromatin at damaged chromosomes. Regulates DNA topoisomerase II binding protein (TopBP1) in the DNA damage response. Ubiquitinates acetylated PCK1. Acts as a positive regulator of the canonical Wnt signaling pathway by mediating (1) ubiquitination and stabilization of CTNNB1, and (2) 'Lys-48'-linked ubiquitination and degradation of TLE3. Promotes disassembly of the mitotic checkpoint complex (MCC) from the APC/C complex by catalyzing ubiquitination of BUB1B, BUB3 and CDC20. Plays an essential role in extraembryonic development. Required for the maintenance of skeletal tissue homeostasis by acting as an inhibitor of hedgehog (HH) signaling. The protein is E3 ubiquitin-protein ligase UBR5 (UBR5) of Homo sapiens (Human).